The following is a 266-amino-acid chain: 4-hydroxy-tetrahydrodipicolinate reductase (266 aa).

NAD(+) is bound at residue 10 to 15 (GPRGRM). K38 contributes to the NADP(+) binding site. Residues 99–101 (GTT) and 125–128 (APNF) each bind NAD(+). The active-site Proton donor/acceptor is the H155. H156 contacts (S)-2,3,4,5-tetrahydrodipicolinate. The active-site Proton donor is the K159. 165–166 (GT) is a binding site for (S)-2,3,4,5-tetrahydrodipicolinate.

This sequence belongs to the DapB family.

Its subcellular location is the cytoplasm. It catalyses the reaction (S)-2,3,4,5-tetrahydrodipicolinate + NAD(+) + H2O = (2S,4S)-4-hydroxy-2,3,4,5-tetrahydrodipicolinate + NADH + H(+). The enzyme catalyses (S)-2,3,4,5-tetrahydrodipicolinate + NADP(+) + H2O = (2S,4S)-4-hydroxy-2,3,4,5-tetrahydrodipicolinate + NADPH + H(+). It functions in the pathway amino-acid biosynthesis; L-lysine biosynthesis via DAP pathway; (S)-tetrahydrodipicolinate from L-aspartate: step 4/4. Functionally, catalyzes the conversion of 4-hydroxy-tetrahydrodipicolinate (HTPA) to tetrahydrodipicolinate. This Bacillus cytotoxicus (strain DSM 22905 / CIP 110041 / 391-98 / NVH 391-98) protein is 4-hydroxy-tetrahydrodipicolinate reductase.